We begin with the raw amino-acid sequence, 211 residues long: Small ribosomal subunit protein uS3 (211 aa).

The 69-residue stretch at 38–106 folds into the KH type-2 domain; that stretch reads LRKFIKKAFY…NIELNIIEVK (69 aa).

This sequence belongs to the universal ribosomal protein uS3 family. Part of the 30S ribosomal subunit. Forms a tight complex with proteins S10 and S14.

Its function is as follows. Binds the lower part of the 30S subunit head. Binds mRNA in the 70S ribosome, positioning it for translation. This chain is Small ribosomal subunit protein uS3, found in Ehrlichia canis (strain Jake).